The following is a 351-amino-acid chain: DNA-directed RNA polymerase subunit alpha (351 aa).

The alpha N-terminal domain (alpha-NTD) stretch occupies residues 1-245 (MPRRNLLKGF…EHFTVFVNFD (245 aa)). Positions 261–351 (AVLELLNTKI…MRQKEEIDEA (91 aa)) are alpha C-terminal domain (alpha-CTD).

It belongs to the RNA polymerase alpha chain family. In terms of assembly, homodimer. The RNAP catalytic core consists of 2 alpha, 1 beta, 1 beta' and 1 omega subunit. When a sigma factor is associated with the core the holoenzyme is formed, which can initiate transcription.

It carries out the reaction RNA(n) + a ribonucleoside 5'-triphosphate = RNA(n+1) + diphosphate. Its function is as follows. DNA-dependent RNA polymerase catalyzes the transcription of DNA into RNA using the four ribonucleoside triphosphates as substrates. In Treponema pallidum (strain Nichols), this protein is DNA-directed RNA polymerase subunit alpha.